A 341-amino-acid polypeptide reads, in one-letter code: Cyclic GMP-AMP synthase-like receptor (341 aa).

Residues Ser64 and 77 to 79 (EFD) contribute to the ATP site. Glu77, Asp79, and Asp172 together coordinate Mg(2+). Position 172 (Asp172) interacts with GTP. Residues Lys230 and 246-250 (SYHIK) each bind ATP. A Mn(2+)-binding site is contributed by Glu258.

This sequence belongs to the mab-21 family. It depends on Mg(2+) as a cofactor. Mn(2+) serves as cofactor.

The catalysed reaction is GTP + ATP = 2',3'-cGAMP + 2 diphosphate. The enzyme catalyses GTP + ATP = pppGp(2'-5')A + diphosphate. It catalyses the reaction pppGp(2'-5')A = 2',3'-cGAMP + diphosphate. Functionally, nucleotidyltransferase that catalyzes the formation of cyclic GMP-AMP (2',3'-cGAMP) from ATP and GTP and plays a key role in innate immunity. Acts as a key sensor of double-stranded RNA (dsRNA), the presence of dsRNA in the cytoplasm being a danger signal that triggers the immune responses. Directly binds dsRNA, activating the nucleotidyltransferase activity, leading to synthesis of 2',3'-cGAMP, a second messenger that binds to and activates Sting, thereby triggering the immune response via activation of the NF-kappa-B transcription factor. The sequence is that of Cyclic GMP-AMP synthase-like receptor from Hydra vulgaris (Hydra).